The primary structure comprises 778 residues: Endonuclease MutS2 (778 aa).

Position 328-335 (glycine 328–threonine 335) interacts with ATP. A Smr domain is found at leucine 702–lysine 777.

It belongs to the DNA mismatch repair MutS family. MutS2 subfamily. As to quaternary structure, homodimer. Binds to stalled ribosomes, contacting rRNA.

In terms of biological role, endonuclease that is involved in the suppression of homologous recombination and thus may have a key role in the control of bacterial genetic diversity. Functionally, acts as a ribosome collision sensor, splitting the ribosome into its 2 subunits. Detects stalled/collided 70S ribosomes which it binds and splits by an ATP-hydrolysis driven conformational change. Acts upstream of the ribosome quality control system (RQC), a ribosome-associated complex that mediates the extraction of incompletely synthesized nascent chains from stalled ribosomes and their subsequent degradation. Probably generates substrates for RQC. This is Endonuclease MutS2 from Streptococcus pneumoniae (strain Hungary19A-6).